Consider the following 430-residue polypeptide: Asparagine--tRNA ligase (430 aa).

It belongs to the class-II aminoacyl-tRNA synthetase family. In terms of assembly, homodimer.

It localises to the cytoplasm. The catalysed reaction is tRNA(Asn) + L-asparagine + ATP = L-asparaginyl-tRNA(Asn) + AMP + diphosphate + H(+). The sequence is that of Asparagine--tRNA ligase from Staphylococcus aureus (strain bovine RF122 / ET3-1).